The primary structure comprises 39 residues: Cytochrome b6-f complex subunit 5 (39 aa).

The helical transmembrane segment at 5-25 threads the bilayer; that stretch reads LLCGIVLGLVPITLLGLFVSA.

The protein belongs to the PetG family. As to quaternary structure, the 4 large subunits of the cytochrome b6-f complex are cytochrome b6, subunit IV (17 kDa polypeptide, PetD), cytochrome f and the Rieske protein, while the 4 small subunits are PetG, PetL, PetM and PetN. The complex functions as a dimer.

The protein localises to the cellular thylakoid membrane. Its function is as follows. Component of the cytochrome b6-f complex, which mediates electron transfer between photosystem II (PSII) and photosystem I (PSI), cyclic electron flow around PSI, and state transitions. PetG is required for either the stability or assembly of the cytochrome b6-f complex. This chain is Cytochrome b6-f complex subunit 5, found in Prochlorococcus marinus (strain MIT 9515).